We begin with the raw amino-acid sequence, 163 residues long: UPF0523 protein B (163 aa).

It belongs to the UPF0523 family.

The polypeptide is UPF0523 protein B (Dictyostelium discoideum (Social amoeba)).